The following is a 179-amino-acid chain: Large ribosomal subunit protein uL5 (179 aa).

Belongs to the universal ribosomal protein uL5 family. As to quaternary structure, part of the 50S ribosomal subunit; part of the 5S rRNA/L5/L18/L25 subcomplex. Contacts the 5S rRNA and the P site tRNA. Forms a bridge to the 30S subunit in the 70S ribosome.

This is one of the proteins that bind and probably mediate the attachment of the 5S RNA into the large ribosomal subunit, where it forms part of the central protuberance. In the 70S ribosome it contacts protein S13 of the 30S subunit (bridge B1b), connecting the 2 subunits; this bridge is implicated in subunit movement. Contacts the P site tRNA; the 5S rRNA and some of its associated proteins might help stabilize positioning of ribosome-bound tRNAs. In Shewanella woodyi (strain ATCC 51908 / MS32), this protein is Large ribosomal subunit protein uL5.